A 389-amino-acid polypeptide reads, in one-letter code: Acetate kinase (389 aa).

A Mg(2+)-binding site is contributed by Asn9. Lys16 lines the ATP pocket. Arg77 is a binding site for substrate. The active-site Proton donor/acceptor is the Asp134. ATP is bound by residues His194–Gly198, Asp268–Arg270, and Gly316–Asn320. Residue Glu370 coordinates Mg(2+).

The protein belongs to the acetokinase family. As to quaternary structure, homodimer. Requires Mg(2+) as cofactor. Mn(2+) serves as cofactor.

Its subcellular location is the cytoplasm. The catalysed reaction is acetate + ATP = acetyl phosphate + ADP. It functions in the pathway metabolic intermediate biosynthesis; acetyl-CoA biosynthesis; acetyl-CoA from acetate: step 1/2. Catalyzes the formation of acetyl phosphate from acetate and ATP. Can also catalyze the reverse reaction. The chain is Acetate kinase from Mycolicibacterium vanbaalenii (strain DSM 7251 / JCM 13017 / BCRC 16820 / KCTC 9966 / NRRL B-24157 / PYR-1) (Mycobacterium vanbaalenii).